The chain runs to 305 residues: N-acetylmuramic acid 6-phosphate etherase (305 aa).

The SIS domain occupies 59–222; that stretch reads TSKALGKGGR…STGVMVKLGK (164 aa). Glu87 (proton donor) is an active-site residue. Glu118 is an active-site residue.

It belongs to the GCKR-like family. MurNAc-6-P etherase subfamily. In terms of assembly, homodimer.

It carries out the reaction N-acetyl-D-muramate 6-phosphate + H2O = N-acetyl-D-glucosamine 6-phosphate + (R)-lactate. Its pathway is amino-sugar metabolism; N-acetylmuramate degradation. Specifically catalyzes the cleavage of the D-lactyl ether substituent of MurNAc 6-phosphate, producing GlcNAc 6-phosphate and D-lactate. The polypeptide is N-acetylmuramic acid 6-phosphate etherase (Crocosphaera subtropica (strain ATCC 51142 / BH68) (Cyanothece sp. (strain ATCC 51142))).